We begin with the raw amino-acid sequence, 167 residues long: Crossover junction endodeoxyribonuclease RuvC (167 aa).

Active-site residues include aspartate 14, glutamate 75, and aspartate 147. Aspartate 14, glutamate 75, and aspartate 147 together coordinate Mg(2+).

The protein belongs to the RuvC family. As to quaternary structure, homodimer which binds Holliday junction (HJ) DNA. The HJ becomes 2-fold symmetrical on binding to RuvC with unstacked arms; it has a different conformation from HJ DNA in complex with RuvA. In the full resolvosome a probable DNA-RuvA(4)-RuvB(12)-RuvC(2) complex forms which resolves the HJ. It depends on Mg(2+) as a cofactor.

The protein resides in the cytoplasm. The enzyme catalyses Endonucleolytic cleavage at a junction such as a reciprocal single-stranded crossover between two homologous DNA duplexes (Holliday junction).. Functionally, the RuvA-RuvB-RuvC complex processes Holliday junction (HJ) DNA during genetic recombination and DNA repair. Endonuclease that resolves HJ intermediates. Cleaves cruciform DNA by making single-stranded nicks across the HJ at symmetrical positions within the homologous arms, yielding a 5'-phosphate and a 3'-hydroxyl group; requires a central core of homology in the junction. The consensus cleavage sequence is 5'-(A/T)TT(C/G)-3'. Cleavage occurs on the 3'-side of the TT dinucleotide at the point of strand exchange. HJ branch migration catalyzed by RuvA-RuvB allows RuvC to scan DNA until it finds its consensus sequence, where it cleaves and resolves the cruciform DNA. The chain is Crossover junction endodeoxyribonuclease RuvC from Synechocystis sp. (strain ATCC 27184 / PCC 6803 / Kazusa).